We begin with the raw amino-acid sequence, 227 residues long: Chloronitrobenzene nitroreductase (227 aa).

14–18 (RRTKR) serves as a coordination point for FMN. S44 is a binding site for NADP(+). FMN is bound by residues 172–173 (GL) and R215.

The protein belongs to the nitroreductase family. It depends on FMN as a cofactor.

It catalyses the reaction N-phenylhydroxylamine + 2 NADP(+) + H2O = nitrobenzene + 2 NADPH + 2 H(+). The protein operates within xenobiotic degradation; nitrobenzene degradation. It participates in xenobiotic degradation; 4-chloronitrobenzene degradation. Involved in the biodegradation of chlorinated nitroaromatic compounds. Catalyzes the reduction of 4-chloronitrobenzene to yield 1-hydroxylamino-4-chlorobenzene. Probably also able to catalyze the two-electron reduction of nitrobenzene (NB) to produce a nitrosobenzene (NOB) intermediate, which is immediately reduced to hydroxylaminobenzene (HAB) by a second two-electron transfer. This chain is Chloronitrobenzene nitroreductase, found in Comamonas testosteroni (Pseudomonas testosteroni).